A 63-amino-acid chain; its full sequence is Large ribosomal subunit protein bL32 (63 aa).

Residues 1 to 18 show a composition bias toward basic residues; the sequence is MAHPKRRISRSRRDKRRA. Residues 1 to 27 are disordered; that stretch reads MAHPKRRISRSRRDKRRAQYNAKTKAP.

The protein belongs to the bacterial ribosomal protein bL32 family.

The polypeptide is Large ribosomal subunit protein bL32 (Chloroherpeton thalassium (strain ATCC 35110 / GB-78)).